The sequence spans 1034 residues: Teashirt homolog 2 (1034 aa).

Residues 1–90 (MPRRKQQAPK…NESLLSDASD (90 aa)) are disordered. Residues 13 to 38 (AGYAQEEQLKEEEEIKEEEEEEDSGS) are a coiled coil. The segment covering 21 to 36 (LKEEEEIKEEEEEEDS) has biased composition (acidic residues). Positions 65-90 (SYQNSPGSHLSNQDAENESLLSDASD) are enriched in polar residues. A Glycyl lysine isopeptide (Lys-Gly) (interchain with G-Cter in SUMO2) cross-link involves residue Lys188. C2H2-type zinc fingers lie at residues 215–239 (FRCRQCSAAYDTLVELTVHMNETGH) and 275–299 (LKCMFCGDSFDSLQDLSVHMIKTKH). The interval 239–265 (HYQDDNRKKDKLRPTSYSKPRKRAFQD) is disordered. Residues Lys306 and Lys315 each participate in a glycyl lysine isopeptide (Lys-Gly) (interchain with G-Cter in SUMO2) cross-link. The C2H2-type 3; atypical zinc finger occupies 380-404 (LKCMECGSSHDTLQQLTTHMMVTGH). Residue Lys417 forms a Glycyl lysine isopeptide (Lys-Gly) (interchain with G-Cter in SUMO2) linkage. Positions 432-455 (LSEAPNSDSLAPKPSSNSASDCTA) are enriched in polar residues. The tract at residues 432–496 (LSEAPNSDSL…PLQKPLDPTI (65 aa)) is disordered. Positions 459–482 (ELKKESKKERPEETSKDEKVVKSE) are enriched in basic and acidic residues. Glycyl lysine isopeptide (Lys-Gly) (interchain with G-Cter in SUMO2) cross-links involve residues Lys461, Lys480, Lys497, Lys601, and Lys652. Disordered stretches follow at residues 598 to 676 (TQVK…TSAL) and 763 to 789 (QPIDLTKSKSKKAESSQAQSCMSPPQK). Over residues 600-668 (VKKESEDKDE…KEGSEKEKPQ (69 aa)) the composition is skewed to basic and acidic residues. Residues Lys800 and Lys820 each participate in a glycyl lysine isopeptide (Lys-Gly) (interchain with G-Cter in SUMO2) cross-link. Positions 841-911 (RKGRQSNWNP…NVKYQLRKTG (71 aa)) form a DNA-binding region, homeobox; atypical. Residues 926–948 (FYCSDCASQFRTPSTYISHLESH) form a C2H2-type 4 zinc finger. Residue Lys966 forms a Glycyl lysine isopeptide (Lys-Gly) (interchain with G-Cter in SUMO2) linkage. Ser980 is modified (phosphoserine). Residues 994–1017 (FKCKLCCRTFVSKHAVKLHLSKTH) form a C2H2-type 5 zinc finger. Residues 1014-1034 (SKTHSKSPEHHSQFVTDVDEE) form a disordered region.

Belongs to the teashirt C2H2-type zinc-finger protein family. As to quaternary structure, interacts (via homeobox domain) with APBB1 (via PID domain 1). Post-translationally, sumoylated. As to expression, expressed in brain; strongly reduced in post-mortem elderly subjects with Alzheimer disease.

It localises to the nucleus. Probable transcriptional regulator involved in developmental processes. May act as a transcriptional repressor (Potential). The protein is Teashirt homolog 2 (TSHZ2) of Homo sapiens (Human).